A 144-amino-acid chain; its full sequence is uncharacterized protein (144 aa).

This is an uncharacterized protein from Archaeoglobus fulgidus (strain ATCC 49558 / DSM 4304 / JCM 9628 / NBRC 100126 / VC-16).